The following is a 356-amino-acid chain: MPTVLALETSCDESAAAVLRLNNGCLQVIASRIASQVEKHAQWGGVVPEVASRLHVEALPHLVEEVLQEAGQSMARFDAVAATVTPGLAGALMVGSVTGRSLAALHALPFFGIHHLEGHLASVRLAEHPPRPPYLVLLVSGGHTELIRVGAESEMVRLGRSHDDAAGEAFDKVGRLLGLAYPGGPAIQALAATGDSGRFSLPKGRVSKPGGGFHPYDFSFSGLKTAMLRLVQALSEADEDLPRADLAASFEQVVADVLVERSLLCANDQGLKTVVMVGGVAANRRLRELMSKRGQEQGIEVHTAPLRYCTDNAAMIGAAALQRLVSGVNGSSLELGVAARWPLDKTEVLYHSPPPF.

Fe cation contacts are provided by His-115 and His-119. Residues 138 to 142 (LVSGG), Asp-171, Gly-184, and Asn-283 contribute to the substrate site. Asp-311 is a Fe cation binding site.

This sequence belongs to the KAE1 / TsaD family. It depends on Fe(2+) as a cofactor.

It is found in the cytoplasm. The enzyme catalyses L-threonylcarbamoyladenylate + adenosine(37) in tRNA = N(6)-L-threonylcarbamoyladenosine(37) in tRNA + AMP + H(+). Functionally, required for the formation of a threonylcarbamoyl group on adenosine at position 37 (t(6)A37) in tRNAs that read codons beginning with adenine. Is involved in the transfer of the threonylcarbamoyl moiety of threonylcarbamoyl-AMP (TC-AMP) to the N6 group of A37, together with TsaE and TsaB. TsaD likely plays a direct catalytic role in this reaction. The sequence is that of tRNA N6-adenosine threonylcarbamoyltransferase from Prochlorococcus marinus (strain MIT 9313).